We begin with the raw amino-acid sequence, 713 residues long: Methionine--tRNA ligase (713 aa).

A 'HIGH' region motif is present at residues 17–27 (PYANGPIHIGH). Residues C149, C152, C162, and C165 each contribute to the Zn(2+) site. Positions 345–349 (KLSTS) match the 'KMSKS' region motif. Residue T348 participates in ATP binding. Positions 530–564 (VRTSTPDDDPAGAVGWEDAGAPLLPAGHPIPSGPD) are disordered. The region spanning 614–713 (DFTQLDLRAG…TEAEDGSVVR (100 aa)) is the tRNA-binding domain.

The protein belongs to the class-I aminoacyl-tRNA synthetase family. MetG type 1 subfamily. As to quaternary structure, homodimer. The cofactor is Zn(2+).

Its subcellular location is the cytoplasm. The catalysed reaction is tRNA(Met) + L-methionine + ATP = L-methionyl-tRNA(Met) + AMP + diphosphate. Is required not only for elongation of protein synthesis but also for the initiation of all mRNA translation through initiator tRNA(fMet) aminoacylation. The polypeptide is Methionine--tRNA ligase (Salinibacter ruber (strain DSM 13855 / M31)).